A 208-amino-acid polypeptide reads, in one-letter code: CASP-like protein 2U9 (208 aa).

The Cytoplasmic portion of the chain corresponds to methionine 1 to lysine 27. The helical transmembrane segment at isoleucine 28–methionine 48 threads the bilayer. At valine 49–glycine 87 the chain is on the extracellular side. A helical transmembrane segment spans residues alanine 88–leucine 108. Residues threonine 109 to alanine 120 lie on the Cytoplasmic side of the membrane. Residues tryptophan 121–valine 141 traverse the membrane as a helical segment. Residues alanine 142 to cysteine 168 lie on the Extracellular side of the membrane. A helical membrane pass occupies residues phenylalanine 169–valine 189. At alanine 190–lysine 208 the chain is on the cytoplasmic side.

Belongs to the Casparian strip membrane proteins (CASP) family. As to quaternary structure, homodimer and heterodimers.

The protein resides in the cell membrane. The protein is CASP-like protein 2U9 of Selaginella moellendorffii (Spikemoss).